Consider the following 220-residue polypeptide: Lipoprotein-releasing system ATP-binding protein LolD (220 aa).

The ABC transporter domain occupies 1–220; it reads MRAVDIHKSY…YRMKDGQWQS (220 aa). 37–44 contacts ATP; sequence GASGAGKS.

The protein belongs to the ABC transporter superfamily. Lipoprotein translocase (TC 3.A.1.125) family. The complex is composed of two ATP-binding proteins (LolD) and two transmembrane proteins (LolC and LolE).

It is found in the cell inner membrane. Part of the ABC transporter complex LolCDE involved in the translocation of mature outer membrane-directed lipoproteins, from the inner membrane to the periplasmic chaperone, LolA. Responsible for the formation of the LolA-lipoprotein complex in an ATP-dependent manner. This Bdellovibrio bacteriovorus (strain ATCC 15356 / DSM 50701 / NCIMB 9529 / HD100) protein is Lipoprotein-releasing system ATP-binding protein LolD.